We begin with the raw amino-acid sequence, 180 residues long: Protein YOP1 (180 aa).

Over 1-35 (MADYLKLFQDSLKGLDTKFAGNQILSRIEAQTKLP) the chain is Cytoplasmic. The helical transmembrane segment at 36 to 55 (RSYVIVGLVAVYFLLIFINV) threads the bilayer. Over 56 to 57 (GG) the chain is Lumenal. The chain crosses the membrane as a helical span at residues 58–78 (IGEILSNFVGFCIPTYYSLKA). The Cytoplasmic segment spans residues 79–88 (LKTATSTDDT). Residues 89-105 (QLLTYWIVFSFLSVIEF) traverse the membrane as a helical segment. Over 106–108 (WSK) the chain is Lumenal. A helical membrane pass occupies residues 109 to 127 (AILYWVPFYWFFKTVFLLY). Topologically, residues 128-180 (IAIPSFGGAQLVYTRLISPFSDKYLPIVEGKSGELAQKVEAAANNAKASGYSR) are cytoplasmic.

Belongs to the DP1 family. In terms of assembly, oligomer.

The protein localises to the endoplasmic reticulum membrane. Its subcellular location is the golgi apparatus membrane. Functionally, required to generate and maintain the structure of the tubular endoplasmic reticulum network and the vacuole. Induces high curvature in membranes and causes membrane tubule formation. Involved in membrane/vesicle trafficking. The sequence is that of Protein YOP1 (YOP1) from Kluyveromyces lactis (strain ATCC 8585 / CBS 2359 / DSM 70799 / NBRC 1267 / NRRL Y-1140 / WM37) (Yeast).